We begin with the raw amino-acid sequence, 150 residues long: Macrodomain Ter protein (150 aa).

This sequence belongs to the MatP family. In terms of assembly, homodimer.

It is found in the cytoplasm. In terms of biological role, required for spatial organization of the terminus region of the chromosome (Ter macrodomain) during the cell cycle. Prevents early segregation of duplicated Ter macrodomains during cell division. Binds specifically to matS, which is a 13 bp signature motif repeated within the Ter macrodomain. This Salmonella typhi protein is Macrodomain Ter protein.